We begin with the raw amino-acid sequence, 122 residues long: Cytochrome c3 hydrogenase large chain (122 aa).

Fe cation is required as a cofactor.

The enzyme catalyses 2 Fe(III)-[cytochrome c3] + H2 = 2 Fe(II)-[cytochrome c3] + 2 H(+). The polypeptide is Cytochrome c3 hydrogenase large chain (hoxG) (Acidithiobacillus ferrooxidans (Thiobacillus ferrooxidans)).